A 206-amino-acid polypeptide reads, in one-letter code: LOB domain-containing protein 35 (206 aa).

Positions threonine 4–leucine 105 constitute an LOB domain. The interval alanine 184–proline 206 is disordered.

It belongs to the LOB domain-containing protein family.

In Arabidopsis thaliana (Mouse-ear cress), this protein is LOB domain-containing protein 35 (LBD35).